A 147-amino-acid chain; its full sequence is Plasminogen receptor (KT) (147 aa).

Over 1–52 (MGFIFSKSMNENMKNQQEFMVTHARLQLERHLTMQNEMRERQMAMQIAWSRE) the chain is Extracellular. Residues 53–73 (FLKYFGTFFGIATISLATGAL) traverse the membrane as a helical segment. Topologically, residues 74–78 (KRKKP) are cytoplasmic. The chain crosses the membrane as a helical span at residues 79 to 99 (AFLVPIVPLSFIFTYQYDLGY). Residues 100 to 147 (GTLLQRMKSEAEDILETEKTKLELPKGLITFESLEKARREQSKLFSDK) lie on the Extracellular side of the membrane.

Interacts with PLAT. Interacts with PLAUR. As to expression, expressed in monocytes; detected in differentiated monocytes but not in progenitor cells. Expressed in adrenal medulla and hippocampus.

The protein localises to the cell membrane. Functionally, receptor for plasminogen. Regulates urokinase plasminogen activator-dependent and stimulates tissue-type plasminogen activator-dependent cell surface plasminogen activation. Proposed to be part of a local catecholaminergic cell plasminogen activation system that regulates neuroendocrine prohormone processing. Involved in regulation of inflammatory response; regulates monocyte chemotactic migration and matrix metalloproteinase activation, such as of MMP2 and MMP9. In Mus musculus (Mouse), this protein is Plasminogen receptor (KT) (Plgrkt).